A 186-amino-acid polypeptide reads, in one-letter code: Peptide deformylase (186 aa).

Fe cation is bound by residues cysteine 113 and histidine 156. Residue glutamate 157 is part of the active site. Histidine 160 is a binding site for Fe cation.

Belongs to the polypeptide deformylase family. The cofactor is Fe(2+).

It carries out the reaction N-terminal N-formyl-L-methionyl-[peptide] + H2O = N-terminal L-methionyl-[peptide] + formate. Removes the formyl group from the N-terminal Met of newly synthesized proteins. Requires at least a dipeptide for an efficient rate of reaction. N-terminal L-methionine is a prerequisite for activity but the enzyme has broad specificity at other positions. The chain is Peptide deformylase from Levilactobacillus brevis (strain ATCC 367 / BCRC 12310 / CIP 105137 / JCM 1170 / LMG 11437 / NCIMB 947 / NCTC 947) (Lactobacillus brevis).